A 447-amino-acid chain; its full sequence is Tubulin beta chain (447 aa).

Residues glutamine 11, glutamate 69, serine 138, glycine 142, threonine 143, glycine 144, asparagine 204, and asparagine 226 each contribute to the GTP site. Glutamate 69 contacts Mg(2+). Residues 427–447 form a disordered region; it reads EAHMDDEEAEEAYEDEAPPEE. Residues 430–447 show a composition bias toward acidic residues; sequence MDDEEAEEAYEDEAPPEE.

It belongs to the tubulin family. Dimer of alpha and beta chains. A typical microtubule is a hollow water-filled tube with an outer diameter of 25 nm and an inner diameter of 15 nM. Alpha-beta heterodimers associate head-to-tail to form protofilaments running lengthwise along the microtubule wall with the beta-tubulin subunit facing the microtubule plus end conferring a structural polarity. Microtubules usually have 13 protofilaments but different protofilament numbers can be found in some organisms and specialized cells. Mg(2+) is required as a cofactor.

Its subcellular location is the cytoplasm. The protein localises to the cytoskeleton. Functionally, tubulin is the major constituent of microtubules, a cylinder consisting of laterally associated linear protofilaments composed of alpha- and beta-tubulin heterodimers. Microtubules grow by the addition of GTP-tubulin dimers to the microtubule end, where a stabilizing cap forms. Below the cap, tubulin dimers are in GDP-bound state, owing to GTPase activity of alpha-tubulin. The polypeptide is Tubulin beta chain (TBB1) (Uromyces fabae (Rust fungus)).